The chain runs to 432 residues: Proline--tRNA ligase (432 aa).

Belongs to the class-II aminoacyl-tRNA synthetase family. ProS type 2 subfamily. Homodimer.

The protein localises to the cytoplasm. The catalysed reaction is tRNA(Pro) + L-proline + ATP = L-prolyl-tRNA(Pro) + AMP + diphosphate. Catalyzes the attachment of proline to tRNA(Pro) in a two-step reaction: proline is first activated by ATP to form Pro-AMP and then transferred to the acceptor end of tRNA(Pro). This Rickettsia prowazekii (strain Madrid E) protein is Proline--tRNA ligase.